Consider the following 281-residue polypeptide: Aldo-keto reductase MMAR_1744 (281 aa).

Y56 acts as the Proton donor in catalysis. NADPH-binding residues include L196, I234, S237, T245, N246, and R272.

This sequence belongs to the aldo/keto reductase family.

The polypeptide is Aldo-keto reductase MMAR_1744 (Mycobacterium marinum (strain ATCC BAA-535 / M)).